Here is a 344-residue protein sequence, read N- to C-terminus: D-amino-acid oxidase (344 aa).

FAD is bound by residues Ala11, Ser14, Ser49, Gly53, Asn55, and Ile167. (R)-lactate is bound by residues Tyr229 and Arg290. Anthranilate-binding residues include Tyr229 and Arg290. 5 residues coordinate FAD: Arg290, Ser321, Gly324, Tyr325, and Gln326.

This sequence belongs to the DAMOX/DASOX family. FAD serves as cofactor.

Its subcellular location is the peroxisome. It carries out the reaction a D-alpha-amino acid + O2 + H2O = a 2-oxocarboxylate + H2O2 + NH4(+). The enzyme catalyses D-alanine + O2 + H2O = pyruvate + H2O2 + NH4(+). Catalyzes the oxidative deamination of D-amino acids with broad substrate specificity. Enables the organism to utilize D-amino acids as a source of nutrients. Enables the organism to utilize D-alanine as a source of nitrogen. The chain is D-amino-acid oxidase from Komagataella phaffii (strain GS115 / ATCC 20864) (Yeast).